The primary structure comprises 112 residues: Cell cycle protein GpsB (112 aa).

The stretch at 32–75 forms a coiled coil; that stretch reads LDDIIKDYETYISTIEELRQENTRLKEEVKQAKKRQEAAQTTVS.

This sequence belongs to the GpsB family. In terms of assembly, forms polymers through the coiled coil domains. Interacts with PBP1, MreC and EzrA.

Its subcellular location is the cytoplasm. Functionally, divisome component that associates with the complex late in its assembly, after the Z-ring is formed, and is dependent on DivIC and PBP2B for its recruitment to the divisome. Together with EzrA, is a key component of the system that regulates PBP1 localization during cell cycle progression. Its main role could be the removal of PBP1 from the cell pole after pole maturation is completed. Also contributes to the recruitment of PBP1 to the division complex. Not essential for septum formation. This Streptococcus mutans serotype c (strain ATCC 700610 / UA159) protein is Cell cycle protein GpsB.